A 318-amino-acid chain; its full sequence is Curved DNA-binding protein (318 aa).

The region spanning Asp5 to Arg69 is the J domain. The disordered stretch occupies residues Gly111–Gly130.

It localises to the cytoplasm. The protein localises to the nucleoid. Its function is as follows. DNA-binding protein that preferentially recognizes a curved DNA sequence. It is probably a functional analog of DnaJ; displays overlapping activities with DnaJ, but functions under different conditions, probably acting as a molecular chaperone in an adaptive response to environmental stresses other than heat shock. Lacks autonomous chaperone activity; binds native substrates and targets them for recognition by DnaK. Its activity is inhibited by the binding of CbpM. The polypeptide is Curved DNA-binding protein (Pseudomonas putida (strain GB-1)).